A 206-amino-acid chain; its full sequence is Ribosomal RNA large subunit methyltransferase E (206 aa).

S-adenosyl-L-methionine-binding residues include Gly54, Trp56, Asp76, Asp94, and Asp118. The Proton acceptor role is filled by Lys158.

Belongs to the class I-like SAM-binding methyltransferase superfamily. RNA methyltransferase RlmE family.

It localises to the cytoplasm. The catalysed reaction is uridine(2552) in 23S rRNA + S-adenosyl-L-methionine = 2'-O-methyluridine(2552) in 23S rRNA + S-adenosyl-L-homocysteine + H(+). Functionally, specifically methylates the uridine in position 2552 of 23S rRNA at the 2'-O position of the ribose in the fully assembled 50S ribosomal subunit. The sequence is that of Ribosomal RNA large subunit methyltransferase E from Methanosphaera stadtmanae (strain ATCC 43021 / DSM 3091 / JCM 11832 / MCB-3).